A 224-amino-acid polypeptide reads, in one-letter code: Superoxide dismutase [Mn], mitochondrial (224 aa).

The transit peptide at 1–20 directs the protein to the mitochondrion; that stretch reads MLLARAFARRSLRAGLWCRQ. The Mn(2+) site is built by H46, H94, D177, and H181.

The protein belongs to the iron/manganese superoxide dismutase family. As to quaternary structure, homotetramer. It depends on Mn(2+) as a cofactor.

Its subcellular location is the mitochondrion matrix. The catalysed reaction is 2 superoxide + 2 H(+) = H2O2 + O2. Its function is as follows. Destroys superoxide anion radicals which are normally produced within the cells and which are toxic to biological systems. In Charybdis feriata (Crucifix crab), this protein is Superoxide dismutase [Mn], mitochondrial.